The following is a 117-amino-acid chain: Gamma-aminobutyric acid receptor-associated protein (117 aa).

An interaction with beta-tubulin region spans residues 1 to 22; the sequence is MKFVYKEEHPFEKRRSEGEKIR. The interval 36-68 is interaction with GABRG2; sequence APKARIGDLDKKKYLVPSDLTVGQFYFLIRKRI. The interaction with GPHN stretch occupies residues 36–117; sequence APKARIGDLD…AYSDESVYGL (82 aa). Residues 48-50 form an interaction with LIR (LC3 nteracting Region) motif of ATG3 region; it reads KYL. Gly-116 carries the Phosphatidylethanolamine amidated glycine; alternate lipid modification. Gly-116 carries the Phosphatidylserine amidated glycine; alternate lipid modification. Position 117 (Leu-117) is a propeptide, removed in mature form.

This sequence belongs to the ATG8 family. In terms of assembly, interacts with GPHN and NSF. Interacts with ATG3, ATG7 and ATG13. Interacts with alpha-tubulin. Interacts with beta-tubulin. Interacts with GABRG2. Interacts with RB1CC1. Interacts with ULK1. Interacts with CALR. Interacts with DDX47. Interacts with TP53INP1 and TP53INP2. Interacts with TBC1D5. Interacts with TBC1D25. Directly interacts with SQSTM1. Interacts with MAPK15. Interacts with TECPR2. Interacts with PCM1. Interacts with TRIM5 and TRIM21. Interacts with MEFV. Interacts with KIF21B. Interacts with WDFY3; this interaction is required for WDFY3 recruitment to MAP1LC3B-positive p62/SQSTM1 bodies. Interacts with FLCN; interaction regulates autophagy. Interacts with UBA5. Interacts with KBTBD6 and KBTBD7; the interaction is direct and required for the ubiquitination of TIAM1. Interacts with reticulophagy regulators RETREG1, RETREG2 and RETREG3. Interacts with IRGM. Interacts with STX17. Interacts with CT55; this interaction may be important for GABARAP protein stability. Interacts with DNM2. Interacts with NCOA4 (via C-terminus). Post-translationally, the precursor molecule is cleaved by ATG4 (ATG4A, ATG4B, ATG4C or ATG4D) to expose the glycine at the C-terminus and form the cytosolic form, GABARAP-I. The processed form is then activated by APG7L/ATG7, transferred to ATG3 and conjugated to phosphatidylethanolamine (PE) phospholipid to form the membrane-bound form, GABARAP-II. During non-canonical autophagy, the processed form is conjugated to phosphatidylserine (PS) phospholipid. ATG4 proteins also mediate the delipidation of PE-conjugated forms. In addition, ATG4B and ATG4D mediate delipidation of ATG8 proteins conjugated to PS during non-canonical autophagy. ATG4B constitutes the major protein for proteolytic activation. ATG4D is the main enzyme for delipidation activity. Expressed in brain (at protein level). Can be found in both somatodendritic and axonal compartment of neurons.

It is found in the cytoplasmic vesicle. The protein resides in the autophagosome membrane. Its subcellular location is the endomembrane system. It localises to the cytoplasm. The protein localises to the cytoskeleton. It is found in the golgi apparatus membrane. In terms of biological role, ubiquitin-like modifier that plays a role in intracellular transport of GABA(A) receptors and its interaction with the cytoskeleton. Involved in autophagy: while LC3s are involved in elongation of the phagophore membrane, the GABARAP/GATE-16 subfamily is essential for a later stage in autophagosome maturation. Through its interaction with the reticulophagy receptor TEX264, participates in the remodeling of subdomains of the endoplasmic reticulum into autophagosomes upon nutrient stress, which then fuse with lysosomes for endoplasmic reticulum turnover. Also required for the local activation of the CUL3(KBTBD6/7) E3 ubiquitin ligase complex, regulating ubiquitination a nd degradation of TIAM1, a guanyl-nucleotide exchange factor (GEF) that activates RAC1 and downstream signal transduction. Thereby, regulates different biological processes including the organization of the cytoskeleton, cell migration and proliferation. Involved in apoptosis. This is Gamma-aminobutyric acid receptor-associated protein from Rattus norvegicus (Rat).